We begin with the raw amino-acid sequence, 1001 residues long: Chloride channel protein clh-3 (1001 aa).

Over 1–48 the chain is Cytoplasmic; that stretch reads MGIGTKILSKIEKNKTSDGLTIPLTPTTQKQSSSWCSFESIKTFFRTV. 2 helical membrane passes run 49–85 and 91–117; these read IRDW…RLFD and HFTL…AHYI. The Selectivity filter part_1 signature appears at 123 to 127; that stretch reads GSGIP. Ser124 lines the chloride pocket. An intramembrane region (helical) is located at residues 126–133; the sequence is IPEMKTIL. Helical transmembrane passes span 142-160 and 167-185; these read LSVR…SLGS and EGPF…TRLV. The short motif at 165-169 is the Selectivity filter part_2 element; sequence GKEGP. Intramembrane regions (helical) lie at residues 202 to 214 and 218 to 226; these read MLAA…VACT and PIGGVLFSI. A run of 5 helical transmembrane segments spans residues 238-258, 285-313, 322-341, 405-425, and 433-456; these read YWRG…LRMF, LPIF…VLFL, IFQK…ISSL, YSPF…AILA, and GIFM…VFSL. The Selectivity filter part_3 motif lies at 433–437; sequence GIFMP. 2 residues coordinate chloride: Ile434 and Phe435. An intramembrane region (helical) is located at residues 473-487; sequence GVYAVVGAAAFCGAV. Positions 488-489 form an intramembrane region, note=Loop between two helices; the sequence is TH. Positions 490–501 form an intramembrane region, helical; the sequence is TVSVAVIVFELT. Positions 502–506 form an intramembrane region, note=Loop between two helices; sequence GQLCH. Residues 507 to 524 traverse the membrane as a helical segment; the sequence is LLPVMIAVLIANAVASYL. At 525 to 1001 the chain is on the cytoplasmic side; the sequence is QPSIYDSIIR…LPDDVHDEKF (477 aa). Tyr529 serves as a coordination point for chloride. Residues 560–619 enclose the CBS 1 domain; sequence MISPLVYIAKDSTVGDIKRALETKTRIRAFPLVENMESLALVGSVSRSQLQRYVDSQIGT. Residues 625–657 are a coiled coil; it reads EATRRIKQRLEDEESERKRREESKSDDTEDSLE. Positions 634-650 are enriched in basic and acidic residues; sequence LEDEESERKRREESKSD. The tract at residues 634-662 is disordered; sequence LEDEESERKRREESKSDDTEDSLETTGAG. A phosphoserine; by gck-3 mark is found at Ser742 and Ser747. Residues 788–845 enclose the CBS 2 domain; sequence IDSTPFQLSEYTSLFKAHSLFSLLGLNRAYVTKKGQLIGVVALKELRLAIEYLQSGKV.

Belongs to the chloride channel (TC 2.A.49) family. As to quaternary structure, isoform a interacts (via RFLI motif) with gck-3 (via C-terminus). In terms of processing, phosphorylated by gck-3; phosphorylation at both Ser-742 and Ser-747 is required to inhibit channel activity. Dephosphorylated by gsp-1/2 during cell swelling and oocyte meiotic maturation, which results in channel activation. Expressed in excretory cell, 4 anterior epithelial cells of the intestine, hermaphrodite-specific neurons and enteric muscles. Expressed also in vulva and uterus. Isoform a is expressed in oocytes (at protein level).

Its subcellular location is the cell membrane. Its function is as follows. Voltage-gated chloride channel. Insensitive to depolarizing conditioning voltages, requires low voltages for activation, insensitive to chloride levels and has a mild sensitivity to low pH. Channel gating properties are conferred by the cytoplasmic C-terminus. Plays a role in egg laying by modulating hermaphrodite-specific neurons (HSN) excitability and the ovulatory contractions of gap-junction-coupled gonadal sheath cells. When active, may prevent tubular formation of the excretory canals. Activated during oocyte meiotic maturation and by membrane hyperpolarization and cell swelling. Inhibited by Zn(2+) and to a lesser extent by Cd(2+). Voltage-gated chloride channel. Sensitive to depolarizing conditioning voltages, requires stronger voltages for activation and activation is slower, is inhibited by low concentrations of chloride and is activated by low pH. Channel gating properties are conferred by the cytoplasmic C-terminus. In Caenorhabditis elegans, this protein is Chloride channel protein clh-3.